A 366-amino-acid chain; its full sequence is Geranylgeranyl pyrophosphate synthase, chloroplastic/chromoplastic (366 aa).

Positions 44–65 (KRTVSSSSSSSLITKEDNNLKS) are disordered. Isopentenyl diphosphate-binding residues include lysine 112, arginine 115, and histidine 144. Residues aspartate 151 and aspartate 157 each coordinate Mg(2+). Arginine 162 lines the dimethylallyl diphosphate pocket. Arginine 163 contacts isopentenyl diphosphate. Dimethylallyl diphosphate-binding residues include lysine 251, threonine 252, glutamine 289, lysine 306, and lysine 316.

Belongs to the FPP/GGPP synthase family. As to quaternary structure, dimer. The cofactor is Mg(2+).

It is found in the plastid. It localises to the chloroplast stroma. The protein localises to the chromoplast. It carries out the reaction isopentenyl diphosphate + dimethylallyl diphosphate = (2E)-geranyl diphosphate + diphosphate. The catalysed reaction is isopentenyl diphosphate + (2E)-geranyl diphosphate = (2E,6E)-farnesyl diphosphate + diphosphate. The enzyme catalyses isopentenyl diphosphate + (2E,6E)-farnesyl diphosphate = (2E,6E,10E)-geranylgeranyl diphosphate + diphosphate. It functions in the pathway isoprenoid biosynthesis; farnesyl diphosphate biosynthesis; farnesyl diphosphate from geranyl diphosphate and isopentenyl diphosphate: step 1/1. The protein operates within isoprenoid biosynthesis; geranyl diphosphate biosynthesis; geranyl diphosphate from dimethylallyl diphosphate and isopentenyl diphosphate: step 1/1. Its pathway is isoprenoid biosynthesis; geranylgeranyl diphosphate biosynthesis; geranylgeranyl diphosphate from farnesyl diphosphate and isopentenyl diphosphate: step 1/1. Its function is as follows. Catalyzes the trans-addition of the three molecules of IPP onto DMAPP to form geranylgeranyl pyrophosphate. This Sinapis alba (White mustard) protein is Geranylgeranyl pyrophosphate synthase, chloroplastic/chromoplastic (GGPS1).